An 83-amino-acid polypeptide reads, in one-letter code: Large ribosomal subunit protein eL31 (83 aa).

This sequence belongs to the eukaryotic ribosomal protein eL31 family.

This chain is Large ribosomal subunit protein eL31, found in Methanococcus vannielii (strain ATCC 35089 / DSM 1224 / JCM 13029 / OCM 148 / SB).